Reading from the N-terminus, the 337-residue chain is Glycerol-3-phosphate dehydrogenase [NAD(P)+] (337 aa).

NADPH contacts are provided by S17, Y18, H38, and K112. Residues K112, G141, and T143 each contribute to the sn-glycerol 3-phosphate site. A145 contacts NADPH. 5 residues coordinate sn-glycerol 3-phosphate: K197, D250, S260, R261, and N262. Residue K197 is the Proton acceptor of the active site. R261 is an NADPH binding site. V285 and E287 together coordinate NADPH.

Belongs to the NAD-dependent glycerol-3-phosphate dehydrogenase family.

It is found in the cytoplasm. The catalysed reaction is sn-glycerol 3-phosphate + NAD(+) = dihydroxyacetone phosphate + NADH + H(+). It catalyses the reaction sn-glycerol 3-phosphate + NADP(+) = dihydroxyacetone phosphate + NADPH + H(+). It participates in membrane lipid metabolism; glycerophospholipid metabolism. Its function is as follows. Catalyzes the reduction of the glycolytic intermediate dihydroxyacetone phosphate (DHAP) to sn-glycerol 3-phosphate (G3P), the key precursor for phospholipid synthesis. The protein is Glycerol-3-phosphate dehydrogenase [NAD(P)+] of Pasteurella multocida (strain Pm70).